Consider the following 286-residue polypeptide: Nucleotide-binding protein HCH_05324 (286 aa).

Residue 8–15 (GRSGSGKS) coordinates ATP. Residue 60–63 (DARN) coordinates GTP.

Belongs to the RapZ-like family.

Displays ATPase and GTPase activities. The chain is Nucleotide-binding protein HCH_05324 from Hahella chejuensis (strain KCTC 2396).